Here is a 150-residue protein sequence, read N- to C-terminus: Arginine repressor (150 aa).

The protein belongs to the ArgR family.

Its subcellular location is the cytoplasm. It functions in the pathway amino-acid biosynthesis; L-arginine biosynthesis [regulation]. Its function is as follows. Regulates arginine biosynthesis genes. This is Arginine repressor from Clostridium botulinum (strain Okra / Type B1).